The sequence spans 313 residues: 4-hydroxy-3-methylbut-2-enyl diphosphate reductase (313 aa).

Residue Cys14 coordinates [4Fe-4S] cluster. The (2E)-4-hydroxy-3-methylbut-2-enyl diphosphate site is built by His43 and His76. Residues His43 and His76 each coordinate dimethylallyl diphosphate. The isopentenyl diphosphate site is built by His43 and His76. Cys98 provides a ligand contact to [4Fe-4S] cluster. Residue His126 coordinates (2E)-4-hydroxy-3-methylbut-2-enyl diphosphate. His126 contacts dimethylallyl diphosphate. His126 is an isopentenyl diphosphate binding site. Glu128 (proton donor) is an active-site residue. Residue Thr166 coordinates (2E)-4-hydroxy-3-methylbut-2-enyl diphosphate. Cys196 serves as a coordination point for [4Fe-4S] cluster. Ser224, Ser225, Asn226, and Ser269 together coordinate (2E)-4-hydroxy-3-methylbut-2-enyl diphosphate. Dimethylallyl diphosphate contacts are provided by Ser224, Ser225, Asn226, and Ser269. The isopentenyl diphosphate site is built by Ser224, Ser225, Asn226, and Ser269.

It belongs to the IspH family. The cofactor is [4Fe-4S] cluster.

The catalysed reaction is isopentenyl diphosphate + 2 oxidized [2Fe-2S]-[ferredoxin] + H2O = (2E)-4-hydroxy-3-methylbut-2-enyl diphosphate + 2 reduced [2Fe-2S]-[ferredoxin] + 2 H(+). It catalyses the reaction dimethylallyl diphosphate + 2 oxidized [2Fe-2S]-[ferredoxin] + H2O = (2E)-4-hydroxy-3-methylbut-2-enyl diphosphate + 2 reduced [2Fe-2S]-[ferredoxin] + 2 H(+). It functions in the pathway isoprenoid biosynthesis; dimethylallyl diphosphate biosynthesis; dimethylallyl diphosphate from (2E)-4-hydroxy-3-methylbutenyl diphosphate: step 1/1. Its pathway is isoprenoid biosynthesis; isopentenyl diphosphate biosynthesis via DXP pathway; isopentenyl diphosphate from 1-deoxy-D-xylulose 5-phosphate: step 6/6. In terms of biological role, catalyzes the conversion of 1-hydroxy-2-methyl-2-(E)-butenyl 4-diphosphate (HMBPP) into a mixture of isopentenyl diphosphate (IPP) and dimethylallyl diphosphate (DMAPP). Acts in the terminal step of the DOXP/MEP pathway for isoprenoid precursor biosynthesis. The polypeptide is 4-hydroxy-3-methylbut-2-enyl diphosphate reductase (Tropheryma whipplei (strain TW08/27) (Whipple's bacillus)).